The sequence spans 295 residues: Bifunctional protein FolD (295 aa).

Residues 166 to 168, S195, and I236 each bind NADP(+); that span reads GRS.

This sequence belongs to the tetrahydrofolate dehydrogenase/cyclohydrolase family. As to quaternary structure, homodimer.

It carries out the reaction (6R)-5,10-methylene-5,6,7,8-tetrahydrofolate + NADP(+) = (6R)-5,10-methenyltetrahydrofolate + NADPH. The enzyme catalyses (6R)-5,10-methenyltetrahydrofolate + H2O = (6R)-10-formyltetrahydrofolate + H(+). It functions in the pathway one-carbon metabolism; tetrahydrofolate interconversion. Its function is as follows. Catalyzes the oxidation of 5,10-methylenetetrahydrofolate to 5,10-methenyltetrahydrofolate and then the hydrolysis of 5,10-methenyltetrahydrofolate to 10-formyltetrahydrofolate. In Pelodictyon phaeoclathratiforme (strain DSM 5477 / BU-1), this protein is Bifunctional protein FolD.